The following is a 319-amino-acid chain: Adenosine receptor A3 (319 aa).

At 1–15 (MEADNTTETDWLNIT) the chain is on the extracellular side. Residues asparagine 5 and asparagine 13 are each glycosylated (N-linked (GlcNAc...) asparagine). A helical transmembrane segment spans residues 16–38 (YITMEAAIGLCAVVGNMLVIWVV). At 39 to 49 (KLNPTLRTTTV) the chain is on the cytoplasmic side. Residues 50 to 73 (YFIVSLALADIAVGVLVIPLAIAV) traverse the membrane as a helical segment. The Extracellular segment spans residues 74 to 85 (SLQVKMHFYACL). A disulfide bridge links cysteine 84 with cysteine 167. A helical transmembrane segment spans residues 86 to 107 (FMSCVLLIFTHASIMSLLAIAV). Residues 108 to 127 (HRYLRVKLTVRYRTVTTQRR) lie on the Cytoplasmic side of the membrane. A helical transmembrane segment spans residues 128-149 (IWLFLGLCWLVSFLVGLTPMFG). Topologically, residues 150-178 (WNRKATLASSQNSSTLLCHFRSVVSLDYM) are extracellular. A glycan (N-linked (GlcNAc...) asparagine) is linked at asparagine 161. The helical transmembrane segment at 179-199 (VFFSFITWILVPLVVMCIIYL) threads the bilayer. Over 200–232 (DIFYIIRNKLSQNLTGFRETRAFYGREFKTAKS) the chain is Cytoplasmic. Residues 233-256 (LFLVLFLFALCWLPLSIINFVSYF) traverse the membrane as a helical segment. The Extracellular portion of the chain corresponds to 257–262 (DVKIPD). A helical membrane pass occupies residues 263 to 285 (VAMCLGILLSHANSMMNPIVYAC). Topologically, residues 286–319 (KIKKFKETYFLILRAVRLCQTSDSLDSNMEQTTE) are cytoplasmic. The S-palmitoyl cysteine moiety is linked to residue cysteine 304.

It belongs to the G-protein coupled receptor 1 family. Phosphorylation on Thr-317 and Thr-318 may be crucial for rapid desensitization. Phosphorylation on Thr-317 may be necessary for phosphorylation on Thr-318 to occur.

The protein localises to the cell membrane. Its function is as follows. Receptor for adenosine. The activity of this receptor is mediated by G proteins which inhibits adenylyl cyclase. The sequence is that of Adenosine receptor A3 (Adora3) from Mus musculus (Mouse).